Consider the following 373-residue polypeptide: Zinc finger protein CONSTANS (373 aa).

The B box-type 1; atypical zinc finger occupies Asn15 to His57. 8 residues coordinate Zn(2+): Cys20, Cys23, Cys43, His48, Cys63, Cys66, Cys86, and His91. The B box-type 2; atypical zinc-finger motif lies at Lys58 to Ile108. Polar residues predominate over residues Ser109–His120. The interval Ser109 to Pro130 is disordered. Residues His121 to Pro130 show a composition bias toward basic and acidic residues. Residues Arg306–Arg348 form the CCT domain.

This sequence belongs to the CONSTANS family. As to quaternary structure, interacts with ADO3, SPA1, SPA2, SPA3 and SPA4. Interacts with MRG1 and MRG2 (via MRG domain). Interacts (via B-box) with MIP1A. Interacts with AS1 to form a functional complex regulating FT expression. Interacts with NFYC9. Component of a red light-dependent nuclear complex made of PHL, PHYB and CO. Interacts directly with PHL in the presence of PHYB. In terms of tissue distribution, expressed in leaves, shoots and shoot apical meristem. Detected in the vascular tissue of the hypocotyl, the cotyledons and the leaves. Restricted to the protoxylem and phloem in young inflorescence stems and to the phloem only in older inflorescences. Also detected in the vascular tissue of the root.

It localises to the nucleus. Its function is as follows. Transcription factor that acts in the long day flowering pathway and may mediate between the circadian clock and the control of flowering. Plays a role in the regulation of flowering time by acting on 'SUPPRESSOR OF OVEREXPRESSION OF CO1', 'TERMINAL FLOWER 1' and 'FLOWERING LOCUS T'. Also regulates P5CS2 and ACS10 (involved in proline and ethylene biosynthesis, respectively). Regulates the expression of NAKR1 by binding to the 5'-TGTG(N2-3)ATG-3' motif. In Arabidopsis thaliana (Mouse-ear cress), this protein is Zinc finger protein CONSTANS.